Here is a 640-residue protein sequence, read N- to C-terminus: DNA gyrase subunit B (640 aa).

One can recognise a Toprim domain in the interval 423–537 (AELYIVEGDS…NGNIYIAQPP (115 aa)). 3 residues coordinate Mg(2+): glutamate 429, aspartate 502, and aspartate 504.

It belongs to the type II topoisomerase GyrB family. Heterotetramer, composed of two GyrA and two GyrB chains. In the heterotetramer, GyrA contains the active site tyrosine that forms a transient covalent intermediate with DNA, while GyrB binds cofactors and catalyzes ATP hydrolysis. It depends on Mg(2+) as a cofactor. The cofactor is Mn(2+). Ca(2+) is required as a cofactor.

The protein resides in the cytoplasm. The catalysed reaction is ATP-dependent breakage, passage and rejoining of double-stranded DNA.. Its function is as follows. A type II topoisomerase that negatively supercoils closed circular double-stranded (ds) DNA in an ATP-dependent manner to modulate DNA topology and maintain chromosomes in an underwound state. Negative supercoiling favors strand separation, and DNA replication, transcription, recombination and repair, all of which involve strand separation. Also able to catalyze the interconversion of other topological isomers of dsDNA rings, including catenanes and knotted rings. Type II topoisomerases break and join 2 DNA strands simultaneously in an ATP-dependent manner. In Spiroplasma citri, this protein is DNA gyrase subunit B.